A 74-amino-acid polypeptide reads, in one-letter code: Conotoxin Vc6.11 (74 aa).

The signal sequence occupies residues 1-19; sequence MEKLTILLLVAAVLMSTQA. Residues 20–41 constitute a propeptide that is removed on maturation; sequence LIQEQRQKAKINLFSKRKPSAE. 2 disulfides stabilise this stretch: cysteine 55–cysteine 66 and cysteine 61–cysteine 71.

The protein belongs to the conotoxin O2 superfamily. As to expression, expressed by the venom duct.

The protein resides in the secreted. Inhibits voltage-gated ion channels. The chain is Conotoxin Vc6.11 from Conus victoriae (Queen Victoria cone).